Here is a 254-residue protein sequence, read N- to C-terminus: Alcohol dehydrogenase (254 aa).

An NAD(+)-binding site is contributed by 10–33; the sequence is FVAGLGGIGFDTSREIVKSGPKNL. Serine 138 serves as a coordination point for substrate. Catalysis depends on tyrosine 151, which acts as the Proton acceptor.

The protein belongs to the short-chain dehydrogenases/reductases (SDR) family. Homodimer.

It catalyses the reaction a primary alcohol + NAD(+) = an aldehyde + NADH + H(+). The enzyme catalyses a secondary alcohol + NAD(+) = a ketone + NADH + H(+). In Drosophila mayaguana (Fruit fly), this protein is Alcohol dehydrogenase (Adh).